Reading from the N-terminus, the 658-residue chain is Interferon-induced GTP-binding protein Mx1 (658 aa).

Met1 is modified (N-acetylmethionine). A disordered region spans residues 1 to 20; that stretch reads MVNSKGKITDSDPGSSHLLL. The Dynamin-type G domain occupies 65-338; that stretch reads DLALPAIAVI…LITHICKTLP (274 aa). Positions 75 to 82 are G1 motif; it reads GDQSSGKS. 75–82 provides a ligand contact to GTP; the sequence is GDQSSGKS. Positions 100 to 102 are G2 motif; the sequence is VTR. The G3 motif stretch occupies residues 176-179; the sequence is DLPG. GTP is bound by residues 176–180 and 245–248; these read DLPGI and TKPD. Residues 245 to 248 form a G4 motif region; the sequence is TKPD. The tract at residues 277 to 280 is G5 motif; the sequence is KCRG. Positions 339 to 364 are bundle signaling element (BSE); that stretch reads LLEKQIKENYEKITEELQKYGSDVPE. Residues 364-531 are middle domain; sequence EEEHEKMFFL…HFQMEQIVYC (168 aa). Positions 365–628 are stalk; the sequence is EEHEKMFFLI…KDTHNWLLKE (264 aa). Residues 551–554 form a critical for lipid-binding region; the sequence is KDKK. The GED domain maps to 570 to 658; sequence LSDIFEHLLA…ARRRLAKFPG (89 aa).

Belongs to the TRAFAC class dynamin-like GTPase superfamily. Dynamin/Fzo/YdjA family. In terms of assembly, homooligomer. Oligomerizes into multimeric filamentous or ring-like structures by virtue of its stalk domain. Oligomerization is critical for GTPase activity, protein stability, and recognition of viral target structures. Interacts with TRPC1, TRPC3, TRPC4, TRPC5, TRPC6 and TRPC7. Interacts with HSPA5. Interacts with TUBB/TUBB5. Interacts with DDX39A and DDX39B. ISGylated.

The protein localises to the cytoplasm. It localises to the endoplasmic reticulum membrane. Its subcellular location is the perinuclear region. In terms of biological role, interferon-induced dynamin-like GTPase with antiviral activity. The protein is Interferon-induced GTP-binding protein Mx1 (MX1) of Otaria byronia (South American sea lion).